The chain runs to 82 residues: Small ribosomal subunit protein bS16 (82 aa).

The protein belongs to the bacterial ribosomal protein bS16 family.

The chain is Small ribosomal subunit protein bS16 from Clostridium botulinum (strain ATCC 19397 / Type A).